Here is a 231-residue protein sequence, read N- to C-terminus: Lipoprotein-releasing system ATP-binding protein LolD (231 aa).

Positions 6–230 constitute an ABC transporter domain; the sequence is LSCKNVSKKY…DGELELVINS (225 aa). ATP is bound at residue 42-49; it reads GLSGSGKT.

This sequence belongs to the ABC transporter superfamily. Lipoprotein translocase (TC 3.A.1.125) family. The complex is composed of two ATP-binding proteins (LolD) and two transmembrane proteins (LolC and LolE).

It localises to the cell inner membrane. Its function is as follows. Part of the ABC transporter complex LolCDE involved in the translocation of mature outer membrane-directed lipoproteins, from the inner membrane to the periplasmic chaperone, LolA. Responsible for the formation of the LolA-lipoprotein complex in an ATP-dependent manner. This is Lipoprotein-releasing system ATP-binding protein LolD from Francisella tularensis subsp. holarctica (strain OSU18).